Consider the following 964-residue polypeptide: SKI family transcriptional corepressor 1 (964 aa).

Disordered regions lie at residues 45–72 (TQLG…SSAL), 278–365 (RTFS…GGSA), 414–452 (AGEP…PGPG), 525–587 (AGGG…RKSS), 610–766 (REAY…GPAA), and 793–842 (YLCT…EDGL). The segment covering 283–310 (QGGGGGGANSGSGGAGKGGAGGGGGPGC) has biased composition (gly residues). Positions 345–355 (ALGLAAAANGP) are enriched in low complexity. Composition is skewed to gly residues over residues 356 to 365 (AGPGGPGGSA) and 417 to 440 (PKGG…GPGA). Residues 571 to 583 (SLAPLAPPPPPPA) show a composition bias toward pro residues. Over residues 652–661 (DTADEPEVDV) the composition is skewed to acidic residues. Residues 798-808 (ETHEPDKEDNH) show a composition bias toward basic and acidic residues. The segment covering 823–834 (DQRSVSQPSPAN) has biased composition (polar residues). Residues 857–921 (ENLAREELQK…DTLCNELDQE (65 aa)) adopt a coiled-coil conformation.

Belongs to the SKI family. Interacts with LBX1. Interacts with SMAD1, SMAD2 and SMAD3.

It is found in the nucleus. Functionally, inhibits BMP signaling. Acts as a transcriptional corepressor of LBX1. The chain is SKI family transcriptional corepressor 1 (Skor1) from Rattus norvegicus (Rat).